Reading from the N-terminus, the 421-residue chain is UDP-N-acetylglucosamine 1-carboxyvinyltransferase (421 aa).

A phosphoenolpyruvate-binding site is contributed by 22–23 (KN). Residue arginine 92 coordinates UDP-N-acetyl-alpha-D-glucosamine. Aspartate 116 acts as the Proton donor in catalysis. UDP-N-acetyl-alpha-D-glucosamine is bound by residues 121 to 125 (RPIDQ), aspartate 307, and isoleucine 330.

It belongs to the EPSP synthase family. MurA subfamily.

It is found in the cytoplasm. It catalyses the reaction phosphoenolpyruvate + UDP-N-acetyl-alpha-D-glucosamine = UDP-N-acetyl-3-O-(1-carboxyvinyl)-alpha-D-glucosamine + phosphate. The protein operates within cell wall biogenesis; peptidoglycan biosynthesis. Functionally, cell wall formation. Adds enolpyruvyl to UDP-N-acetylglucosamine. This is UDP-N-acetylglucosamine 1-carboxyvinyltransferase from Lactobacillus johnsonii (strain CNCM I-12250 / La1 / NCC 533).